Consider the following 51-residue polypeptide: Large ribosomal subunit protein eL39 (51 aa).

Belongs to the eukaryotic ribosomal protein eL39 family. As to quaternary structure, interacts with YIH1.

The chain is Large ribosomal subunit protein eL39 (RPL39) from Kluyveromyces lactis (strain ATCC 8585 / CBS 2359 / DSM 70799 / NBRC 1267 / NRRL Y-1140 / WM37) (Yeast).